Consider the following 387-residue polypeptide: Calcium sensing receptor, chloroplastic (387 aa).

Residues 1-33 constitute a chloroplast transit peptide; the sequence is MAMAEMATKSSLSAKLTLPSSSTKKTLSLRQVS. Residues 34-186 lie on the Lumenal, thylakoid side of the membrane; that stretch reads VSLPTSTSIS…TMDTISSADP (153 aa). Residues 187-207 form a helical membrane-spanning segment; sequence SVIVVAAGAAFLAYLLLPPVF. The Stromal segment spans residues 208–387; it reads SAISFNFRGY…SGTKFLPSSD (180 aa). Positions 231–352 constitute a Rhodanese domain; the sequence is CTKNYLMVDI…WLQSRLGTDS (122 aa). At Thr-380 the chain carries Phosphothreonine.

Post-translationally, phosphorylation seems to be light-dependent. Predominantly expressed in the shoot, including guard cells.

Its subcellular location is the plastid. It localises to the chloroplast thylakoid membrane. Its function is as follows. Modulates cytoplasmic Ca(2+) concentration and is crucial for proper stomatal regulation in response to elevated levels of external Ca(2+). May function by regulating concentrations of inositol 1,4,5-trisphosphate (IP3), which in turn triggers release of Ca(2+) from internal stores. May play a role in de-etiolation. The polypeptide is Calcium sensing receptor, chloroplastic (CAS) (Arabidopsis thaliana (Mouse-ear cress)).